A 140-amino-acid polypeptide reads, in one-letter code: Probable prefoldin subunit 6 (140 aa).

This sequence belongs to the prefoldin subunit beta family. As to quaternary structure, heterohexamer of two PFD-alpha type and four PFD-beta type subunits.

Functionally, binds specifically to cytosolic chaperonin (c-CPN) and transfers target proteins to it. Binds to nascent polypeptide chain and promotes folding in an environment in which there are many competing pathways for nonnative proteins. This is Probable prefoldin subunit 6 (pfdn6) from Dictyostelium discoideum (Social amoeba).